Reading from the N-terminus, the 236-residue chain is 5'-methylthioadenosine/S-adenosylhomocysteine nucleosidase (236 aa).

The Proton acceptor role is filled by glutamate 12. Substrate-binding positions include glycine 78, isoleucine 153, and 174–175 (ME). Residue aspartate 198 is the Proton donor of the active site.

The protein belongs to the PNP/UDP phosphorylase family. MtnN subfamily.

It carries out the reaction S-adenosyl-L-homocysteine + H2O = S-(5-deoxy-D-ribos-5-yl)-L-homocysteine + adenine. It catalyses the reaction S-methyl-5'-thioadenosine + H2O = 5-(methylsulfanyl)-D-ribose + adenine. The enzyme catalyses 5'-deoxyadenosine + H2O = 5-deoxy-D-ribose + adenine. It functions in the pathway amino-acid biosynthesis; L-methionine biosynthesis via salvage pathway; S-methyl-5-thio-alpha-D-ribose 1-phosphate from S-methyl-5'-thioadenosine (hydrolase route): step 1/2. Functionally, catalyzes the irreversible cleavage of the glycosidic bond in both 5'-methylthioadenosine (MTA) and S-adenosylhomocysteine (SAH/AdoHcy) to adenine and the corresponding thioribose, 5'-methylthioribose and S-ribosylhomocysteine, respectively. Also cleaves 5'-deoxyadenosine, a toxic by-product of radical S-adenosylmethionine (SAM) enzymes, into 5-deoxyribose and adenine. The sequence is that of 5'-methylthioadenosine/S-adenosylhomocysteine nucleosidase from Shewanella sp. (strain MR-7).